The chain runs to 433 residues: UDP-N-acetylmuramate--L-alanine ligase (433 aa).

Gly108–Ser114 serves as a coordination point for ATP.

The protein belongs to the MurCDEF family.

It is found in the cytoplasm. The enzyme catalyses UDP-N-acetyl-alpha-D-muramate + L-alanine + ATP = UDP-N-acetyl-alpha-D-muramoyl-L-alanine + ADP + phosphate + H(+). The protein operates within cell wall biogenesis; peptidoglycan biosynthesis. Functionally, cell wall formation. The polypeptide is UDP-N-acetylmuramate--L-alanine ligase (Anoxybacillus flavithermus (strain DSM 21510 / WK1)).